A 226-amino-acid chain; its full sequence is UPF0173 metal-dependent hydrolase GTNG_2675 (226 aa).

Belongs to the UPF0173 family.

The chain is UPF0173 metal-dependent hydrolase GTNG_2675 from Geobacillus thermodenitrificans (strain NG80-2).